The following is a 341-amino-acid chain: Protein CbhE (341 aa).

The segment covering 287–297 (IDEENTSDSSE) has biased composition (acidic residues). The disordered stretch occupies residues 287–341 (IDEENTSDSSEEGTSKNRFRDTLFSNVPDSSSDSENEQEREKKELAGKTPSFRLC). Residues 323 to 332 (EQEREKKELA) are compositionally biased toward basic and acidic residues.

Its subcellular location is the cytoplasm. May be involved in the pathogenesis of acute Q fever. In Coxiella burnetii (strain RSA 493 / Nine Mile phase I), this protein is Protein CbhE (cbhE).